The following is a 450-amino-acid chain: MSGKVCFDYSKALDFIQEHELDNLQDQVHAAHRALHDGTGAGNDFLGWIDLPVNYDREEFSRIQKAAEKIRNDSDVLLVIGIGGSYLGAKATLEALNHSFYNIVDKSERKGPQIFFVGHHISSTYVQELFDVLEGKDVSINVISKSGTTTEPAIAFRIFRDYLEKKYGKEESRKRIYATTDRERGALKTLANEEGYESFIIPDDVGGRFSVLTAVGLLPIAASGLDIEAMMKGAADARDAFRNSDLKENPAYQYAVVRNALYNKGKTIELMVNYEPALQYFSEWWKQLYGESEGKDGKGIFPASVNFSTDLHSMGQYVQDGRRDLFETIIQVEKPKKNMTIEKADQDLDGLNYLAGETMDFVNKKAFEGTLLAHVDGGVPNLVVSVPELDEYYMGYLMYFFEKACGLSGYLLGVNPFDQPGVEAYKKNMFALLGKPGFEEQKAALEKRLK.

A Phosphothreonine modification is found at Thr-39. Catalysis depends on Glu-291, which acts as the Proton donor. Active-site residues include His-312 and Lys-426.

Belongs to the GPI family.

It is found in the cytoplasm. The enzyme catalyses alpha-D-glucose 6-phosphate = beta-D-fructose 6-phosphate. It functions in the pathway carbohydrate biosynthesis; gluconeogenesis. Its pathway is carbohydrate degradation; glycolysis; D-glyceraldehyde 3-phosphate and glycerone phosphate from D-glucose: step 2/4. Functionally, catalyzes the reversible isomerization of glucose-6-phosphate to fructose-6-phosphate. This is Glucose-6-phosphate isomerase from Halalkalibacterium halodurans (strain ATCC BAA-125 / DSM 18197 / FERM 7344 / JCM 9153 / C-125) (Bacillus halodurans).